We begin with the raw amino-acid sequence, 570 residues long: Putative ABC transporter ATP-binding protein SAV2684 (570 aa).

ABC transporter domains are found at residues Ile6–Glu247 and Leu304–Arg537. Residues Gly40–Ser47 and Gly338–Ser345 contribute to the ATP site.

This sequence belongs to the ABC transporter superfamily.

It is found in the cell membrane. Its function is as follows. Probably part of an ABC transporter complex. Responsible for energy coupling to the transport system. This Staphylococcus aureus (strain Mu50 / ATCC 700699) protein is Putative ABC transporter ATP-binding protein SAV2684.